The sequence spans 324 residues: Zinc metalloproteinase leucurolysin-B (324 aa).

One can recognise a Peptidase M12B domain in the interval 1 to 119 (DTVLLNRISH…LNPQCILNEP (119 aa)). Aspartate 11 contacts Ca(2+). Cystine bridges form between cysteine 34/cysteine 114, cysteine 74/cysteine 98, and cysteine 76/cysteine 81. Histidine 59 is a binding site for Zn(2+). Glutamate 60 is an active-site residue. 2 residues coordinate Zn(2+): histidine 63 and histidine 69. Residue asparagine 97 is glycosylated (N-linked (GlcNAc...) asparagine). 8 residues coordinate Ca(2+): cysteine 114, asparagine 117, valine 129, asparagine 132, leucine 134, glutamate 136, glutamate 139, and aspartate 142. Residues 127–213 (PPVCGNELLE…QCPTDDFKRN (87 aa)) form the Disintegrin domain. 13 cysteine pairs are disulfide-bonded: cysteine 130–cysteine 159, cysteine 141–cysteine 154, cysteine 143–cysteine 149, cysteine 153–cysteine 176, cysteine 167–cysteine 173, cysteine 172–cysteine 198, cysteine 185–cysteine 205, cysteine 192–cysteine 224, cysteine 217–cysteine 229, cysteine 236–cysteine 286, cysteine 251–cysteine 295, cysteine 264–cysteine 274, and cysteine 281–cysteine 315. The D/ECD-tripeptide signature appears at 191-193 (ECD). 2 N-linked (GlcNAc...) asparagine glycosylation sites follow: asparagine 296 and asparagine 305.

The protein belongs to the venom metalloproteinase (M12B) family. P-III subfamily. P-IIIa sub-subfamily. As to quaternary structure, monomer. Zn(2+) serves as cofactor. Post-translationally, N-glycosylated. In terms of processing, the N-terminus is blocked. As to expression, expressed by the venom gland.

Its subcellular location is the secreted. With respect to regulation, inhibited by EDTA, but not by PMSF. Pre-incubation with 2 mM DTT completely abolishes activity. Functionally, snake venom zinc metalloproteinase that acts as a potent hemorrhagic toxin. Hydrolyzes the insulin B chain at the 14-Ala-|-Leu-15 bond but not the 16-Tyr-|-Leu-17 bond. Degrades the alpha-chain of fibrin and hydrolyzes the Aalpha-chain of fibrinogen (FGA) while leaving the beta and gamma chains unaffected. Degrades type-I collagen and its gelatin. Degrades the alpha-1 chain of type-IV collagen and its gelatin but not the alpha-2 chain. Degrades plasma fibronectin, plasma vitronectin and basement membrane enactin. It inhibits collagen-induced platelet aggregation. In Bothrops leucurus (Whitetail lancehead), this protein is Zinc metalloproteinase leucurolysin-B.